A 90-amino-acid polypeptide reads, in one-letter code: Small ribosomal subunit protein bS16 (90 aa).

The protein belongs to the bacterial ribosomal protein bS16 family.

The polypeptide is Small ribosomal subunit protein bS16 (Listeria innocua serovar 6a (strain ATCC BAA-680 / CLIP 11262)).